The following is a 917-amino-acid chain: Protein Ami (917 aa).

An N-terminal signal peptide occupies residues M1 to A30. Positions K118–P245 constitute an N-acetylmuramoyl-L-alanine amidase domain. The GW repeat region, necessary and sufficient for cell surface attachment stretch occupies residues L262–Q917. GW domains lie at Y279–T358, M361–Y435, Y440–T519, M522–Y596, Y601–T679, M682–Y756, Y761–T840, and M843–Q917.

It in the N-terminal section; belongs to the N-acetylmuramoyl-L-alanine amidase 2 family.

It localises to the cell surface. The protein localises to the cell membrane. In terms of biological role, a bacteriolysin able to lyse both L.monocytogenes and S.aureus. This is Protein Ami from Listeria monocytogenes serotype 1/2a (strain EGD / Mackaness).